The chain runs to 225 residues: Protein-L-isoaspartate O-methyltransferase (225 aa).

S75 is a catalytic residue.

The protein belongs to the methyltransferase superfamily. L-isoaspartyl/D-aspartyl protein methyltransferase family.

It is found in the cytoplasm. It catalyses the reaction [protein]-L-isoaspartate + S-adenosyl-L-methionine = [protein]-L-isoaspartate alpha-methyl ester + S-adenosyl-L-homocysteine. Its function is as follows. Catalyzes the methyl esterification of L-isoaspartyl residues in peptides and proteins that result from spontaneous decomposition of normal L-aspartyl and L-asparaginyl residues. It plays a role in the repair and/or degradation of damaged proteins. The protein is Protein-L-isoaspartate O-methyltransferase of Xanthomonas euvesicatoria pv. vesicatoria (strain 85-10) (Xanthomonas campestris pv. vesicatoria).